We begin with the raw amino-acid sequence, 142 residues long: Membrane protein YneK (142 aa).

A helical transmembrane segment spans residues 6 to 26; that stretch reads FLWFILFWVIMMVVLLSIGGF.

In terms of assembly, interacts with the N-terminal D1 domain of dynamin-like protein DynA.

The protein localises to the cell membrane. The polypeptide is Membrane protein YneK (yneK) (Bacillus subtilis (strain 168)).